The following is a 581-amino-acid chain: Neither inactivation nor afterpotential protein G (581 aa).

Residues 1 to 26 form the signal peptide; the sequence is MGMKFQKILVLAGIVIGFLSIIVVLA. 48-77 contacts FAD; it reads DYVIVGGGTGGSTLTSLLAKNSNGSVLLIE. N-linked (GlcNAc...) asparagine glycans are attached at residues Asn70, Asn156, Asn404, and Asn464. The Proton acceptor role is filled by His516.

The protein belongs to the GMC oxidoreductase family. Requires FAD as cofactor.

The protein resides in the secreted. Functionally, oxidoreductase involved in biosynthesis of 3-hydroxyretinal, a chromophore for rhodopsin Rh1. Not responsible for the initial hydroxylation of the retinal ring but rather acts in a subsequent step in chromophore production. May catalyze the conversion of (3R)-3-hydroxyretinol to the 3S enantiomer. The chain is Neither inactivation nor afterpotential protein G (ninaG) from Drosophila melanogaster (Fruit fly).